The primary structure comprises 466 residues: Argininosuccinate lyase 1 (466 aa).

It belongs to the lyase 1 family. Argininosuccinate lyase subfamily.

The protein localises to the cytoplasm. The catalysed reaction is 2-(N(omega)-L-arginino)succinate = fumarate + L-arginine. Its pathway is amino-acid biosynthesis; L-arginine biosynthesis; L-arginine from L-ornithine and carbamoyl phosphate: step 3/3. This chain is Argininosuccinate lyase 1, found in Agrobacterium fabrum (strain C58 / ATCC 33970) (Agrobacterium tumefaciens (strain C58)).